Reading from the N-terminus, the 831-residue chain is Periplasmic nitrate reductase (831 aa).

Residues 1–29 (MKISRRDFIKQTAITATASVAGVTLPAGA) constitute a signal peptide (tat-type signal). Residues 41–97 (LKWSKAPCRFCGTGCGVTVAVKDNKVVATQGDPQAEVNKGLNCVKGYFLSKIMYGQD) form the 4Fe-4S Mo/W bis-MGD-type domain. Residues C48, C51, C55, and C83 each contribute to the [4Fe-4S] cluster site. Residues K85, Q152, N177, C181, 214–221 (WGSNMAEM), 245–249 (STFTH), 264–266 (QTD), M375, Q379, N485, 511–512 (SD), K534, D561, and 721–730 (TGRVLEHWHS) contribute to the Mo-bis(molybdopterin guanine dinucleotide) site. Position 797 (W797) interacts with substrate. 2 residues coordinate Mo-bis(molybdopterin guanine dinucleotide): N805 and K822.

This sequence belongs to the prokaryotic molybdopterin-containing oxidoreductase family. NasA/NapA/NarB subfamily. In terms of assembly, component of the periplasmic nitrate reductase NapAB complex composed of NapA and NapB. The cofactor is [4Fe-4S] cluster. Requires Mo-bis(molybdopterin guanine dinucleotide) as cofactor. Post-translationally, predicted to be exported by the Tat system. The position of the signal peptide cleavage has been experimentally proven.

The protein localises to the periplasm. The catalysed reaction is 2 Fe(II)-[cytochrome] + nitrate + 2 H(+) = 2 Fe(III)-[cytochrome] + nitrite + H2O. In terms of biological role, catalytic subunit of the periplasmic nitrate reductase complex NapAB. Receives electrons from NapB and catalyzes the reduction of nitrate to nitrite. This chain is Periplasmic nitrate reductase, found in Cupriavidus necator (strain ATCC 17699 / DSM 428 / KCTC 22496 / NCIMB 10442 / H16 / Stanier 337) (Ralstonia eutropha).